Reading from the N-terminus, the 513-residue chain is ATP synthase subunit alpha 1 (513 aa).

Gly-169–Thr-176 provides a ligand contact to ATP.

The protein belongs to the ATPase alpha/beta chains family. As to quaternary structure, F-type ATPases have 2 components, CF(1) - the catalytic core - and CF(0) - the membrane proton channel. CF(1) has five subunits: alpha(3), beta(3), gamma(1), delta(1), epsilon(1). CF(0) has three main subunits: a(1), b(2) and c(9-12). The alpha and beta chains form an alternating ring which encloses part of the gamma chain. CF(1) is attached to CF(0) by a central stalk formed by the gamma and epsilon chains, while a peripheral stalk is formed by the delta and b chains.

The protein resides in the cell inner membrane. It carries out the reaction ATP + H2O + 4 H(+)(in) = ADP + phosphate + 5 H(+)(out). Its function is as follows. Produces ATP from ADP in the presence of a proton gradient across the membrane. The alpha chain is a regulatory subunit. In Nitrosospira multiformis (strain ATCC 25196 / NCIMB 11849 / C 71), this protein is ATP synthase subunit alpha 1.